Reading from the N-terminus, the 96-residue chain is Small ribosomal subunit protein bS21 (96 aa).

Over residues 37 to 52 the composition is skewed to basic and acidic residues; sequence EKPSEKKAREKAEAVR. The tract at residues 37 to 96 is disordered; that stretch reads EKPSEKKAREKAEAVRRARKLARKKLQREGLLPSKPKPVFGADRGRGAAGGAGGAPRPAR. The segment covering 53 to 62 has biased composition (basic residues); the sequence is RARKLARKKL.

The protein belongs to the bacterial ribosomal protein bS21 family.

This Afipia carboxidovorans (strain ATCC 49405 / DSM 1227 / KCTC 32145 / OM5) (Oligotropha carboxidovorans) protein is Small ribosomal subunit protein bS21.